A 181-amino-acid polypeptide reads, in one-letter code: Protein Syd (181 aa).

This sequence belongs to the Syd family.

The protein resides in the cell inner membrane. Interacts with the SecY protein in vivo. May bind preferentially to an uncomplexed state of SecY, thus functioning either as a chelating agent for excess SecY in the cell or as a regulatory factor that negatively controls the translocase function. The protein is Protein Syd of Alteromonas mediterranea (strain DSM 17117 / CIP 110805 / LMG 28347 / Deep ecotype).